The chain runs to 126 residues: Apolipoprotein C-IV (126 aa).

The signal sequence occupies residues 1–27 (MSLLRHRLQALPSLCLCVLVLACIGAC).

It belongs to the apolipoprotein C4 family.

The protein localises to the secreted. May participate in lipoprotein metabolism. The polypeptide is Apolipoprotein C-IV (APOC4) (Aotus nancymaae (Ma's night monkey)).